Consider the following 142-residue polypeptide: Alpha-lactalbumin (142 aa).

Positions 1–19 (MRFFVPLFLVGILFPAILA) are cleaved as a signal peptide. The C-type lysozyme domain occupies 20–142 (KQFTKCELSQ…KLEQWLCEKL (123 aa)). 4 disulfides stabilise this stretch: cysteine 25/cysteine 139, cysteine 47/cysteine 130, cysteine 80/cysteine 96, and cysteine 92/cysteine 110. The Ca(2+) site is built by threonine 57 and glutamine 58. The N-linked (GlcNAc...) asparagine glycan is linked to asparagine 64. Glutamate 68 contributes to the Zn(2+) binding site. N-linked (GlcNAc...) asparagine; atypical; partial glycosylation is present at asparagine 90. Positions 98, 100, 101, 102, 103, 106, and 107 each coordinate Ca(2+). Residue glutamate 135 participates in Zn(2+) binding.

Belongs to the glycosyl hydrolase 22 family. As to quaternary structure, lactose synthase (LS) is a heterodimer of a catalytic component, beta1,4-galactosyltransferase (beta4Gal-T1) and a regulatory component, alpha-lactalbumin (LA). Mammary gland specific. Secreted in milk.

It is found in the secreted. Its function is as follows. Regulatory subunit of lactose synthase, changes the substrate specificity of galactosyltransferase in the mammary gland making glucose a good acceptor substrate for this enzyme. This enables LS to synthesize lactose, the major carbohydrate component of milk. In other tissues, galactosyltransferase transfers galactose onto the N-acetylglucosamine of the oligosaccharide chains in glycoproteins. In Homo sapiens (Human), this protein is Alpha-lactalbumin (LALBA).